The chain runs to 692 residues: E3 ubiquitin-protein ligase MARCHF7 (692 aa).

Position 1 is an N-acetylmethionine (M1). Disordered regions lie at residues 1-165 (MESK…SHRS), 201-280 (STNH…GRRT), 296-343 (FFSR…RASE), 360-425 (LSQN…HLFR), 440-474 (SLGA…RNTG), and 512-532 (SSAD…PEKL). A compositionally biased stretch (basic and acidic residues) spans 37 to 48 (YHSRDSSFRLDS). 2 stretches are compositionally biased toward polar residues: residues 61–83 (PYQS…SQNQ) and 95–132 (SCTN…SSMV). Positions 140 to 153 (LMRERRDLERRRDS) are enriched in basic and acidic residues. Positions 201–214 (STNHQLPSEHQTVP) are enriched in polar residues. Over residues 215–233 (SSRDSSRSSFRSHFSPRQS) the composition is skewed to low complexity. Residues 235–272 (SFRNSSHPAFSYLSSRNETPTISSSERAGSSQRPFQES) are compositionally biased toward polar residues. The segment covering 296–305 (FFSRRSSQDS) has biased composition (low complexity). The span at 306–336 (LNTRSLSSENYISPRTLTSQSRNNGASSSEV) shows a compositional bias: polar residues. Phosphoserine occurs at positions 318 and 389. Over residues 450-462 (ASGASGNASASGS) the composition is skewed to low complexity. Positions 516–532 (GKSEKAKSAPSRDPEKL) are enriched in basic and acidic residues. An RING-CH-type zinc finger spans residues 545–615 (DEEEEGDLCR…ELCKEKLQLN (71 aa)). Residues C553, C556, C571, C573, H581, C584, C605, and C608 each coordinate Zn(2+). T687 bears the Phosphothreonine mark. Position 688 is a phosphoserine (S688).

The protein localises to the cytoplasm. The enzyme catalyses S-ubiquitinyl-[E2 ubiquitin-conjugating enzyme]-L-cysteine + [acceptor protein]-L-lysine = [E2 ubiquitin-conjugating enzyme]-L-cysteine + N(6)-ubiquitinyl-[acceptor protein]-L-lysine.. It participates in protein modification; protein ubiquitination. E3 ubiquitin-protein ligase which may specifically enhance the E2 activity of HIP2. E3 ubiquitin ligases accept ubiquitin from an E2 ubiquitin-conjugating enzyme in the form of a thioester and then directly transfer the ubiquitin to targeted substrates. May be involved in T-cell proliferation by regulating LIF secretion. May play a role in lysosome homeostasis. Promotes 'Lys-6', 'Lys-11' and 'Lys-63'-linked mixed polyubiquitination on ATG14 leading to the inhibition of autophagy by impairing the interaction between ATG14 and STX7. Participates in the dopamine-mediated negative regulation of the NLRP3 inflammasome by promoting its uibiquitination and subsequent degradation. The chain is E3 ubiquitin-protein ligase MARCHF7 (Marchf7) from Rattus norvegicus (Rat).